The primary structure comprises 864 residues: Arf-GAP with GTPase, ANK repeat and PH domain-containing protein 1 (864 aa).

A small GTPase-like region spans residues 66 to 276 (SRSVPELKVG…QTSNGGGSLS (211 aa)). The GLD domain maps to 67 to 241 (RSVPELKVGI…TRKKQQLSIG (175 aa)). Residues 78–85 (GNLASGKS), 122–126 (IRDEG), and 178–181 (TQDA) contribute to the GTP site. Disordered stretches follow at residues 266 to 343 (SQTS…IGSG), 405 to 455 (VPGK…QMAS), and 499 to 549 (TGLG…LSST). Residues 275–289 (LSDYSSSVPSTPSTS) are compositionally biased toward low complexity. The span at 322–337 (KGSDPDKDKKGLESRA) shows a compositional bias: basic and acidic residues. One can recognise a PH domain in the interval 346–591 (IPIKQGMLLK…WVQAIESQIL (246 aa)). Polar residues predominate over residues 413–428 (ATSSCAPVASPKTNGL). The span at 507–517 (SSPSISSTTSP) shows a compositional bias: low complexity. Residues 527–537 (ANRKKHRRKKS) are compositionally biased toward basic residues. The span at 538–549 (TSNFKVDGLSST) shows a compositional bias: polar residues. The Arf-GAP domain occupies 612–732 (ALALQSIRNL…LFLSPLPCRD (121 aa)). Residues 627–650 (CVDCDAQSPDWASLNLGALMCIEC) form a C4-type zinc finger. ANK repeat units lie at residues 771–800 (DRRT…DVMA) and 804–833 (HGNT…PDEQ). Over residues 845-854 (KNNRNNNSNA) the composition is skewed to low complexity. Residues 845-864 (KNNRNNNSNAGGSGLMPTLI) are disordered.

It belongs to the centaurin gamma-like family. In terms of assembly, homodimer. Interacts with several subunits of the AP-3 protein complex.

Its subcellular location is the cytoplasm. GTPase-activating protein. Directly and specifically regulates the adapter protein 3 (AP-3)-dependent trafficking of proteins in the endosomal-lysosomal system. This chain is Arf-GAP with GTPase, ANK repeat and PH domain-containing protein 1 (agap1), found in Xenopus laevis (African clawed frog).